A 327-amino-acid polypeptide reads, in one-letter code: Flotillin-like protein FloA (327 aa).

A helical transmembrane segment spans residues 2–22; the sequence is IGLIIIVVIVLVALLLLFSFV. The interval 305-327 is disordered; the sequence is ADTGMRNSINQRTNQKDDESPDK. A compositionally biased stretch (basic and acidic residues) spans 318-327; it reads NQKDDESPDK.

This sequence belongs to the flotillin-like FloA family. As to quaternary structure, homooligomerizes.

The protein localises to the cell membrane. It localises to the membrane raft. Its function is as follows. Found in functional membrane microdomains (FMM) that may be equivalent to eukaryotic membrane rafts. FMMs are highly dynamic and increase in number as cells age. Flotillins are thought to be important factors in membrane fluidity. The sequence is that of Flotillin-like protein FloA from Staphylococcus saprophyticus subsp. saprophyticus (strain ATCC 15305 / DSM 20229 / NCIMB 8711 / NCTC 7292 / S-41).